A 117-amino-acid chain; its full sequence is Histone-like protein Hq1 (117 aa).

2 stretches are compositionally biased toward basic residues: residues 1 to 17 (MPAK…RSKA) and 39 to 50 (RKLRAAQKKLAK). Residues 1 to 117 (MPAKKRKTTR…RGRGRPRKKA (117 aa)) are disordered. Residues 51 to 68 (AKKDASRKLAKLRKEAAR) are compositionally biased toward basic and acidic residues. Over residues 71–117 (AAAKKTRAPSKKGRKKATRKKGGGRSRKTARKVSTMKRGRGRPRKKA) the composition is skewed to basic residues.

In terms of biological role, binds DNA in vitro. The polypeptide is Histone-like protein Hq1 (hcbA) (Coxiella burnetii (strain RSA 493 / Nine Mile phase I)).